A 75-amino-acid chain; its full sequence is uncharacterized protein (75 aa).

Positions 1–18 (MRKYLSARSMCCSFFSCA) are cleaved as a signal peptide.

This is an uncharacterized protein from Treponema pallidum (strain Nichols).